A 143-amino-acid polypeptide reads, in one-letter code: Large ribosomal subunit protein uL11 (143 aa).

It belongs to the universal ribosomal protein uL11 family. As to quaternary structure, part of the ribosomal stalk of the 50S ribosomal subunit. Interacts with L10 and the large rRNA to form the base of the stalk. L10 forms an elongated spine to which L12 dimers bind in a sequential fashion forming a multimeric L10(L12)X complex. Post-translationally, one or more lysine residues are methylated.

Functionally, forms part of the ribosomal stalk which helps the ribosome interact with GTP-bound translation factors. The sequence is that of Large ribosomal subunit protein uL11 from Chromobacterium violaceum (strain ATCC 12472 / DSM 30191 / JCM 1249 / CCUG 213 / NBRC 12614 / NCIMB 9131 / NCTC 9757 / MK).